A 459-amino-acid chain; its full sequence is Alcohol acyl transferase 1 allele GSa (459 aa).

Active-site proton acceptor residues include H164 and N385.

The protein belongs to the plant acyltransferase family. In terms of tissue distribution, highly expressed in the cortex and skin of ripe fruit.

The enzyme catalyses butan-1-ol + acetyl-CoA = butyl acetate + CoA. It catalyses the reaction butan-1-ol + butanoyl-CoA = butyl butanoate + CoA. The catalysed reaction is butan-1-ol + hexanoyl-CoA = butyl hexanoate + CoA. It carries out the reaction hexan-1-ol + butanoyl-CoA = hexyl butanoate + CoA. The enzyme catalyses hexan-1-ol + acetyl-CoA = hexyl acetate + CoA. It catalyses the reaction 2-methylbutan-1-ol + butanoyl-CoA = 2-methylbutyl butanoate + CoA. The catalysed reaction is ethanol + butanoyl-CoA = ethyl butanoate + CoA. It carries out the reaction hexanoyl-CoA + ethanol = ethyl hexanoate + CoA. In terms of biological role, involved in the biosynthesis of volatile esters which confer ripe apple fruit flavor. Alcohol acyl transferase that can use a wide range of alcohols as substrate, including 2-methylbutanol, hexanol and ethanol, to produce esters such as butyl butanoate, butyl hexanoate, hexyl butanoate, ethyl butanoate and ethyl hexanoate and, to some extent, 2-methylbutyl acetate (2MBA), butyl acetate, hexyl acetate and 2-methylbutyl butanoate (2MBB). This is Alcohol acyl transferase 1 allele GSa from Malus domestica (Apple).